A 130-amino-acid polypeptide reads, in one-letter code: MAKVQYMGTGRRKKSVARVRLVPGNGKVTINKREIETFFGLETLRVIVNQPLVLTGTKDKFDVLVNVHGGGFTGQAGAIRHGITRALVKSDETLRPELKKAGFLTRDPRMKERKKYGLKKARRAPQFSKR.

Residues 99–110 (KKAGFLTRDPRM) show a composition bias toward basic and acidic residues. The tract at residues 99–130 (KKAGFLTRDPRMKERKKYGLKKARRAPQFSKR) is disordered. A compositionally biased stretch (basic residues) spans 111–130 (KERKKYGLKKARRAPQFSKR).

The protein belongs to the universal ribosomal protein uS9 family.

The protein is Small ribosomal subunit protein uS9 of Clostridium botulinum (strain Alaska E43 / Type E3).